The chain runs to 123 residues: Small ribosomal subunit protein uS12 (123 aa).

Positions 1–32 are disordered; it reads MPTIQQLVRKGRKTKVSKNKTPALKGSPQRRG. Basic residues predominate over residues 9-18; sequence RKGRKTKVSK. Asp89 is modified (3-methylthioaspartic acid).

The protein belongs to the universal ribosomal protein uS12 family. Part of the 30S ribosomal subunit. Contacts proteins S8 and S17. May interact with IF1 in the 30S initiation complex.

With S4 and S5 plays an important role in translational accuracy. Its function is as follows. Interacts with and stabilizes bases of the 16S rRNA that are involved in tRNA selection in the A site and with the mRNA backbone. Located at the interface of the 30S and 50S subunits, it traverses the body of the 30S subunit contacting proteins on the other side and probably holding the rRNA structure together. The combined cluster of proteins S8, S12 and S17 appears to hold together the shoulder and platform of the 30S subunit. The polypeptide is Small ribosomal subunit protein uS12 (Thermobifida fusca (strain YX)).